Here is a 312-residue protein sequence, read N- to C-terminus: Speedy protein A (312 aa).

Positions 67-199 (RQEMTAFFKL…SHYIWQRERS (133 aa)) are speedy/Ringo box; Required for CDK-binding. S221 carries the phosphoserine modification. At T223 the chain carries Phosphothreonine.

This sequence belongs to the Speedy/Ringo family. In terms of assembly, interacts with CDK1. Interacts with CDK2. May interact with CDKN1B/KIP1. Identified in a complex with CDK2 and CDKN1B/KIP1, where it interacts primarily with CDK2.

It localises to the nucleus. In terms of biological role, regulates the G1/S phase transition of the cell cycle by binding and activating CDK1 and CDK2. Contributes to CDK2 activation without promoting CDK2 phosphorylation, by inducing a conformation change of the CDK2 T-loop that obstructs the substrate-binding cleft prior to kinase activation. Interferes with CDKN1B-mediated inhibition of CDK2. Mediates cell survival during the DNA damage process through activation of CDK2. This is Speedy protein A from Rattus norvegicus (Rat).